The primary structure comprises 346 residues: Ribosomal RNA small subunit methyltransferase H (346 aa).

S-adenosyl-L-methionine-binding positions include 47–49, Asp-65, Phe-92, Asp-113, and Gln-120; that span reads GGY. The interval 294–346 is disordered; that stretch reads AVEPGSDEVAGNPRARSAKLRAAERTDAPAHPDGDLAGLLPADLSQRRGRRRS. The span at 314–327 shows a compositional bias: basic and acidic residues; it reads RAAERTDAPAHPDG. Residues 328-337 are compositionally biased toward low complexity; it reads DLAGLLPADL.

It belongs to the methyltransferase superfamily. RsmH family.

The protein resides in the cytoplasm. It carries out the reaction cytidine(1402) in 16S rRNA + S-adenosyl-L-methionine = N(4)-methylcytidine(1402) in 16S rRNA + S-adenosyl-L-homocysteine + H(+). Its function is as follows. Specifically methylates the N4 position of cytidine in position 1402 (C1402) of 16S rRNA. The chain is Ribosomal RNA small subunit methyltransferase H from Azorhizobium caulinodans (strain ATCC 43989 / DSM 5975 / JCM 20966 / LMG 6465 / NBRC 14845 / NCIMB 13405 / ORS 571).